A 419-amino-acid chain; its full sequence is L-rhamnose isomerase (419 aa).

Mn(2+)-binding residues include H262, D294, and D296.

It belongs to the rhamnose isomerase family. In terms of assembly, homotetramer. Mn(2+) is required as a cofactor.

Its subcellular location is the cytoplasm. It catalyses the reaction L-rhamnopyranose = L-rhamnulose. It functions in the pathway carbohydrate degradation; L-rhamnose degradation; glycerone phosphate from L-rhamnose: step 1/3. Its function is as follows. Catalyzes the interconversion of L-rhamnose and L-rhamnulose. The protein is L-rhamnose isomerase of Escherichia coli O139:H28 (strain E24377A / ETEC).